Here is a 546-residue protein sequence, read N- to C-terminus: Adenine DNA glycosylase (546 aa).

A disordered region spans residues 19–51 (RAAVGSGHRKQAASQEGRQKHAKNNSQAKPSAC). The Proton donor/acceptor role is filled by Glu-131. Residues Cys-287, Cys-294, Cys-297, and Cys-303 each contribute to the [4Fe-4S] cluster site. Residues 364-495 (PREESSATCV…AMKKVFRVYQ (132 aa)) enclose the Nudix hydrolase domain. The Nudix box motif lies at 404 to 426 (VTWEPSEQLQRKALLQELQRWAG).

Belongs to the Nth/MutY family. Requires [4Fe-4S] cluster as cofactor.

The protein resides in the nucleus. Its subcellular location is the mitochondrion. It carries out the reaction Hydrolyzes free adenine bases from 7,8-dihydro-8-oxoguanine:adenine mismatched double-stranded DNA, leaving an apurinic site.. Involved in oxidative DNA damage repair. Initiates repair of A*oxoG to C*G by removing the inappropriately paired adenine base from the DNA backbone. Possesses both adenine and 2-OH-A DNA glycosylase activities. This chain is Adenine DNA glycosylase (MUTYH), found in Homo sapiens (Human).